The chain runs to 1625 residues: Probable cation-transporting ATPase I (1625 aa).

8 helical membrane-spanning segments follow: residues 148-168, 177-197, 358-378, 637-657, 673-693, 778-798, 968-988, and 997-1017; these read VVSA…PNSA, LAIL…GATV, LIAA…AGAI, ASES…LLLV, WLNP…WSAA, ILAV…ALLV, LTSK…ALAL, and AVAD…PLVA. The active-site 4-aspartylphosphate intermediate is aspartate 1053. Positions 1340 and 1344 each coordinate Mg(2+). Helical transmembrane passes span 1401–1421, 1432–1452, and 1547–1567; these read ILVG…AFGA, LLVN…TSQF, and VIAT…TPVI.

This sequence belongs to the cation transport ATPase (P-type) (TC 3.A.3) family.

It localises to the cell membrane. It carries out the reaction ATP + H2O = ADP + phosphate + H(+). The polypeptide is Probable cation-transporting ATPase I (ctpI) (Mycobacterium tuberculosis (strain CDC 1551 / Oshkosh)).